The primary structure comprises 798 residues: Elongation factor G, mitochondrial (798 aa).

Residues 1 to 24 (MRVIRAAAALNSSCAASSRQGARY) constitute a mitochondrion transit peptide. A tr-type G domain is found at 97–383 (SMVRNIGIAA…AVCDYLPNPG (287 aa)). GTP contacts are provided by residues 106-113 (AHIDSGKT), 181-185 (DTPGH), and 235-238 (NKMD).

The protein belongs to the TRAFAC class translation factor GTPase superfamily. Classic translation factor GTPase family. EF-G/EF-2 subfamily.

The protein resides in the mitochondrion. The protein operates within protein biosynthesis; polypeptide chain elongation. Functionally, mitochondrial GTPase that catalyzes the GTP-dependent ribosomal translocation step during translation elongation. During this step, the ribosome changes from the pre-translocational (PRE) to the post-translocational (POST) state as the newly formed A-site-bound peptidyl-tRNA and P-site-bound deacylated tRNA move to the P and E sites, respectively. Catalyzes the coordinated movement of the two tRNA molecules, the mRNA and conformational changes in the ribosome. The protein is Elongation factor G, mitochondrial of Chaetomium globosum (strain ATCC 6205 / CBS 148.51 / DSM 1962 / NBRC 6347 / NRRL 1970) (Soil fungus).